Reading from the N-terminus, the 393-residue chain is METFLFTSESVNEGHPDKLCDQISDAVLDACLEQDPDSKVACETCTKTNMVMVFGEITTKATVDYEKIVRDTCRSIGFISDDVGLDADKCKVLVNIEQQSPDIAQGVHGHFTKRPEDIGAGDQGHMFGYATDETPELMPLSHVLATKIGAKLTEVRKNGTCRWLRPDGKTQVTVEYYNDNGAMVPVRVHTVLISTQHDETVTNDEIARDLKEHVIKPIIPEKYLDDKTIFHLNPSGRFVIGGPHGDAGLTGRKIIIDTYGGWGAHGGGAFSGKDPTKVDRSGAYIVRQAAKSVVANGMARRALVQVSYAIGVPEPLSVFVDTYGTGLIPDKEILKIVKESFDFRPGMMTINLDLKRGGNGRFLKTAAYGHFGRDDPDFTWEVVKPLKWDKPQA.

E9 provides a ligand contact to Mg(2+). Residue H15 participates in ATP binding. A K(+)-binding site is contributed by E43. E56 and Q99 together coordinate L-methionine. Residues 167 to 169 (DGK), 235 to 238 (SGRF), D246, 252 to 253 (RK), A269, K273, and K277 each bind ATP. L-methionine is bound at residue D246. Residue K277 participates in L-methionine binding.

Belongs to the AdoMet synthase family. In terms of assembly, homotetramer. Mn(2+) is required as a cofactor. Requires Mg(2+) as cofactor. It depends on Co(2+) as a cofactor. The cofactor is K(+).

Its subcellular location is the cytoplasm. It catalyses the reaction L-methionine + ATP + H2O = S-adenosyl-L-methionine + phosphate + diphosphate. It participates in amino-acid biosynthesis; S-adenosyl-L-methionine biosynthesis; S-adenosyl-L-methionine from L-methionine: step 1/1. Catalyzes the formation of S-adenosylmethionine from methionine and ATP. The reaction comprises two steps that are both catalyzed by the same enzyme: formation of S-adenosylmethionine (AdoMet) and triphosphate, and subsequent hydrolysis of the triphosphate. The protein is S-adenosylmethionine synthase (SAMS) of Brassica rapa subsp. pekinensis (Chinese cabbage).